The sequence spans 458 residues: MEREPSASEAAPAAAALFAWGANSYGQLGLGHKEDVLLPQQLNDFCKPRSVRRITGGGGHSAVVTDGGDLFVCGLNKDGQLGLGHTEDIPYFTPCKSLFGCPIQQVACGWDFTIMLTENGQVLSCGSNSFGQLGVPHGPRRCVVPQAIELHKEKVVCIAAGLRHAVAATASGIVFQWGTGLASCGRRLCPGQTLPLFFTAKEPSRVTGLENSKAMCVLAGSDHSASLTDAGEVYVWGSNKHGQLANEAAFLPVPQKIEAHCFQNEKVTAIWSGWTHLVAQTETGKMFTWGRADYGQLGRKLETYEGWKLEKQDSFLPCSRPPNSMPSSPHCLTGATEVSCGSEHNLAIIGGVCYSWGWNEHGMCGDGTEANVWAPKPVQALLSSSGLLVGCGAGHSLALCQLPAHPALVQDPKVTYLSPDAIEDTESQKAMDKERNWKERQSETSTQSQSDWSRNGGL.

7 RCC1 repeats span residues 15–67 (AALF…VTDG), 68–119 (GDLF…LTEN), 120–171 (GQVL…ATAS), 172–230 (GIVF…LTDA), 231–283 (GEVY…QTET), 284–351 (GKMF…IIGG), and 352–402 (VCYS…LCQL). Residues 420–458 (DAIEDTESQKAMDKERNWKERQSETSTQSQSDWSRNGGL) form a disordered region. Positions 426–442 (ESQKAMDKERNWKERQS) are enriched in basic and acidic residues. Serine 427 carries the phosphoserine modification.

In terms of assembly, interacts with SEC5. The interaction occurs only in the presence of magnesium or manganese and is stimulated by dCTP or GTP.

It is found in the cytoplasm. It localises to the nucleus. In terms of biological role, probable guanine nucleotide exchange factor (GEF), which may be involved in the secretion process. This Homo sapiens (Human) protein is Secretion-regulating guanine nucleotide exchange factor (SERGEF).